The chain runs to 243 residues: MSELVPPNIPAEFLPRHIALVMDGNGRWATEKGMKRTEGHRRGEAVLLDVVDACLALGVPYLSAYAFSTENWRRSTEEVRFLMGFNRDVLRRQRDGLHEKGVRVRWVGRRPRLWRSVIRELEAAEELTKDNTNMTLAMCVNYGGRAEIIDAAREIARQAAAGQLRPEQINEKTFPDFLDEPDMPDVDLFLRPSGEKRTSNFLLWQSAYAEMVYQDKLFPDFTPQDLFDAVEEYARRDRRFGTA.

Aspartate 23 is an active-site residue. Aspartate 23 contributes to the Mg(2+) binding site. Substrate-binding positions include 24–27 (GNGR), tryptophan 28, arginine 36, histidine 40, and 68–70 (STE). Asparagine 71 acts as the Proton acceptor in catalysis. Substrate contacts are provided by residues tryptophan 72, arginine 74, arginine 191, and 197–199 (RTS). Residue glutamate 210 coordinates Mg(2+).

The protein belongs to the UPP synthase family. Homodimer. Requires Mg(2+) as cofactor.

Catalyzes the condensation of isopentenyl diphosphate (IPP) with allylic pyrophosphates generating different type of terpenoids. The sequence is that of Isoprenyl transferase 2 from Corynebacterium efficiens (strain DSM 44549 / YS-314 / AJ 12310 / JCM 11189 / NBRC 100395).